The sequence spans 93 residues: MTDTPDVQPPKIEFPCERYPIKVIGDAGEGFSDLVVEIIRRHAPDLDAETLVVRDSSKGRFLSVQVLITATDVDQLQAIHNDLRATGRVHMVL.

This sequence belongs to the UPF0250 family.

In Pseudomonas paraeruginosa (strain DSM 24068 / PA7) (Pseudomonas aeruginosa (strain PA7)), this protein is UPF0250 protein PSPA7_1111.